We begin with the raw amino-acid sequence, 398 residues long: Exodeoxyribonuclease 7 large subunit (398 aa).

Belongs to the XseA family. As to quaternary structure, heterooligomer composed of large and small subunits.

The protein localises to the cytoplasm. The enzyme catalyses Exonucleolytic cleavage in either 5'- to 3'- or 3'- to 5'-direction to yield nucleoside 5'-phosphates.. In terms of biological role, bidirectionally degrades single-stranded DNA into large acid-insoluble oligonucleotides, which are then degraded further into small acid-soluble oligonucleotides. The chain is Exodeoxyribonuclease 7 large subunit from Salinibacter ruber (strain DSM 13855 / M31).